A 303-amino-acid chain; its full sequence is UDP-N-acetylenolpyruvoylglucosamine reductase (303 aa).

The FAD-binding PCMH-type domain occupies 32–212; that stretch reads IGGKADLFLN…EQETKEYLAK (181 aa). The active site involves Arg176. Ser226 serves as the catalytic Proton donor. Glu296 is an active-site residue.

This sequence belongs to the MurB family. FAD serves as cofactor.

It is found in the cytoplasm. It catalyses the reaction UDP-N-acetyl-alpha-D-muramate + NADP(+) = UDP-N-acetyl-3-O-(1-carboxyvinyl)-alpha-D-glucosamine + NADPH + H(+). The protein operates within cell wall biogenesis; peptidoglycan biosynthesis. In terms of biological role, cell wall formation. In Desulforamulus reducens (strain ATCC BAA-1160 / DSM 100696 / MI-1) (Desulfotomaculum reducens), this protein is UDP-N-acetylenolpyruvoylglucosamine reductase.